Consider the following 174-residue polypeptide: Endoribonuclease YbeY (174 aa).

Zn(2+) contacts are provided by H129, H133, and H139.

This sequence belongs to the endoribonuclease YbeY family. Zn(2+) is required as a cofactor.

The protein localises to the cytoplasm. Functionally, single strand-specific metallo-endoribonuclease involved in late-stage 70S ribosome quality control and in maturation of the 3' terminus of the 16S rRNA. This is Endoribonuclease YbeY from Lactobacillus delbrueckii subsp. bulgaricus (strain ATCC BAA-365 / Lb-18).